The sequence spans 673 residues: UvrABC system protein B (673 aa).

The region spanning 30–417 is the Helicase ATP-binding domain; that stretch reads NSILLGNKYQ…SSVVVDQIIR (388 aa). 43–50 provides a ligand contact to ATP; that stretch reads GVTGSGKT. The Beta-hairpin motif lies at 96–119; the sequence is YYDYYQPESYVPSKDLFIEKEATI. One can recognise a Helicase C-terminal domain in the interval 434–600; sequence QMEDLYSEIQ…TIVKKIQNIL (167 aa). Residues 627–662 form the UVR domain; it reads KKLIDKLKFDLEEAVNDERFEDAIVLRDKIKELSSK.

Belongs to the UvrB family. In terms of assembly, forms a heterotetramer with UvrA during the search for lesions. Interacts with UvrC in an incision complex.

Its subcellular location is the cytoplasm. Functionally, the UvrABC repair system catalyzes the recognition and processing of DNA lesions. A damage recognition complex composed of 2 UvrA and 2 UvrB subunits scans DNA for abnormalities. Upon binding of the UvrA(2)B(2) complex to a putative damaged site, the DNA wraps around one UvrB monomer. DNA wrap is dependent on ATP binding by UvrB and probably causes local melting of the DNA helix, facilitating insertion of UvrB beta-hairpin between the DNA strands. Then UvrB probes one DNA strand for the presence of a lesion. If a lesion is found the UvrA subunits dissociate and the UvrB-DNA preincision complex is formed. This complex is subsequently bound by UvrC and the second UvrB is released. If no lesion is found, the DNA wraps around the other UvrB subunit that will check the other stand for damage. This Borreliella burgdorferi (strain ATCC 35210 / DSM 4680 / CIP 102532 / B31) (Borrelia burgdorferi) protein is UvrABC system protein B.